The sequence spans 371 residues: Gustatory and pheromone receptor 39a, isoform A (371 aa).

The Cytoplasmic portion of the chain corresponds to 1–41 (MSKVCRDLRIYLRLLHIMGMMCWHFDSDHCQLVATSGSERY). A helical membrane pass occupies residues 42 to 62 (AVVYAGCILVSTTAGFIFALL). The Extracellular segment spans residues 63–80 (HPSRFHIAIYNQTGNFYE). Asn-73 carries N-linked (GlcNAc...) asparagine glycosylation. A helical transmembrane segment spans residues 81–101 (AVIFRSTCVVLFLVYVILYAW). Over 102 to 127 (RHRYRDLVQHILRLNRRCASSCTNQQ) the chain is Cytoplasmic. The helical transmembrane segment at 128–148 (FLHNIILYGMLTILCFGNYLH) threads the bilayer. The Extracellular segment spans residues 149-161 (GYTRAGLATLPLA). Residues 162–182 (LCMLVYIFAFLVLCLLLMFFV) form a helical membrane-spanning segment. Residues 183 to 228 (SLKQVMTAGLIHYNQQLCQGDLISGLRGRQQILKLCGGELNECFGL) lie on the Cytoplasmic side of the membrane. The chain crosses the membrane as a helical span at residues 229–249 (LMLPIVALVLLMAPSGPFFLI). The Extracellular segment spans residues 250-263 (STVLEGKFRPDECL). The chain crosses the membrane as a helical span at residues 264 to 284 (IMLLTSSTWDTPWMIMLVLML). The Cytoplasmic segment spans residues 285–340 (RTNGISEEANKTAKMLTKVPRTGTGLDRMIEKFLLKNLRQKPILTAYGFFALDKST). Residues 341–361 (LFKLFTAIFTYMVILVQFKEM) traverse the membrane as a helical segment. Residues 362-371 (ENSTKSINKF) are Extracellular-facing. Asn-363 carries N-linked (GlcNAc...) asparagine glycosylation.

The protein belongs to the insect chemoreceptor superfamily. Gustatory receptor (GR) family. Gr21a subfamily. In terms of tissue distribution, expressed in the adult labellar chemosensory neurons, and adult thorax and wing. In larvae, is expressed in neurons of the posterior pharyngeal sense organ.

It is found in the cell membrane. In terms of biological role, gustatory receptor which mediates acceptance or avoidance behavior, depending on its substrates. Plays a role in sustaining courtship behavior in males, possibly through the reception of a stimulating arrestant pheromone. The sequence is that of Gustatory and pheromone receptor 39a, isoform A (Gr39a) from Drosophila melanogaster (Fruit fly).